Reading from the N-terminus, the 417-residue chain is Gamma-glutamyl phosphate reductase (417 aa).

This sequence belongs to the gamma-glutamyl phosphate reductase family.

It is found in the cytoplasm. It catalyses the reaction L-glutamate 5-semialdehyde + phosphate + NADP(+) = L-glutamyl 5-phosphate + NADPH + H(+). The protein operates within amino-acid biosynthesis; L-proline biosynthesis; L-glutamate 5-semialdehyde from L-glutamate: step 2/2. Catalyzes the NADPH-dependent reduction of L-glutamate 5-phosphate into L-glutamate 5-semialdehyde and phosphate. The product spontaneously undergoes cyclization to form 1-pyrroline-5-carboxylate. The sequence is that of Gamma-glutamyl phosphate reductase from Escherichia coli O6:K15:H31 (strain 536 / UPEC).